We begin with the raw amino-acid sequence, 326 residues long: Transcription cofactor vestigial-like protein 3 (326 aa).

Positions 57 to 80 are disordered; sequence VTLPSKQEEEDEEEEEEEKDQPAE. Lys62 participates in a covalent cross-link: Glycyl lysine isopeptide (Lys-Gly) (interchain with G-Cter in SUMO2). A compositionally biased stretch (acidic residues) spans 64–75; that stretch reads EEEDEEEEEEEK. A Glycyl lysine isopeptide (Lys-Gly) (interchain with G-Cter in SUMO2) cross-link involves residue Lys126. Disordered stretches follow at residues 175–203 and 233–256; these read PPGT…PPAV and HAHM…SALD. The segment covering 233 to 249 has biased composition (basic residues); sequence HAHMHHRHRHHHHHHHP.

Belongs to the vestigial family. Enriched in placenta.

Its subcellular location is the nucleus. May act as a specific coactivator for the mammalian TEFs. The chain is Transcription cofactor vestigial-like protein 3 (VGLL3) from Homo sapiens (Human).